Reading from the N-terminus, the 596-residue chain is Structural protein precursor VP8 (596 aa).

The protein resides in the virion. In terms of biological role, 120 subunits of the putative clamp protein VP8b appear to stabilize the capsid shell. In Oryza latifolia (Indian wild rice), this protein is Structural protein precursor VP8.